Here is a 305-residue protein sequence, read N- to C-terminus: Alpha-N-acetylgalactosaminide alpha-2,6-sialyltransferase 3 (305 aa).

At 1–8 (MACILKRK) the chain is on the cytoplasmic side. Residues 9–28 (PVLVVSFIALCILLLAMRLV) form a helical; Signal-anchor for type II membrane protein membrane-spanning segment. The Lumenal segment spans residues 29-305 (NDATFPLLLN…VFTHPNWTLS (277 aa)). A disulfide bond links Cys-80 and Cys-229. N-linked (GlcNAc...) asparagine glycosylation is found at Asn-239 and Asn-301.

It belongs to the glycosyltransferase 29 family. As to expression, in adult tissues, high expression in brain, lung and heart and to a lesser extent in kidney, mammary gland, spleen, testis and thymus.

Its subcellular location is the golgi apparatus membrane. The catalysed reaction is an alpha-Neu5Ac-(2-&gt;3)-beta-D-Gal-(1-&gt;3)-D-GlcNAc derivative + CMP-N-acetyl-beta-neuraminate = an alpha-Neu5Ac-(2-&gt;3)-beta-D-Gal-(1-&gt;3)-[alpha-Neu5Ac-(2-&gt;6)]-D-GlcNAc derivative + CMP + H(+). It catalyses the reaction a ganglioside GM1b (d18:1(4E)) + CMP-N-acetyl-beta-neuraminate = a ganglioside GD1alpha (d18:1(4E)) + CMP + H(+). It carries out the reaction a globoside MSGG + CMP-N-acetyl-beta-neuraminate = a globoside DSGG + CMP + H(+). The enzyme catalyses 3-O-[alpha-Neu5Ac-(2-&gt;3)-beta-D-Gal-(1-&gt;3)-alpha-D-GalNAc]-L-Ser-[protein] + CMP-N-acetyl-beta-neuraminate = a 3-O-{alpha-Neu5Ac-(2-&gt;3)-beta-D-Gal-(1-&gt;3)-[alpha-Neu5Ac-(2-&gt;6)]-alpha-D-GalNAc}-L-seryl-[protein] + CMP + H(+). The catalysed reaction is 3-O-[alpha-Neu5Ac-(2-&gt;3)-beta-D-Gal-(1-&gt;3)-alpha-D-GalNAc]-L-Thr-[protein] + CMP-N-acetyl-beta-neuraminate = a 3-O-{alpha-Neu5Ac-(2-&gt;3)-beta-D-Gal-(1-&gt;3)-[alpha-Neu5Ac-(2-&gt;6)]-alpha-D-GalNAc}-L-threonyl-[protein] + CMP + H(+). Its pathway is protein modification; protein glycosylation. It functions in the pathway glycolipid biosynthesis. Functionally, transfers the sialyl group (N-acetyl-alpha-neuraminyl or NeuAc) from CMP-NeuAc to the GalNAc residue on the NeuAc-alpha-2,3-Gal-beta-1,3-GalNAc sequence of glycoproteins and glycolipids forming an alpha-2,6-linkage. Produces branched type disialyl structures by transfer of a sialyl group onto a GalNAc residue inside the backbone core chains. ST6GalNAcIII prefers glycolipids to glycoproteins, predominantly catalyzing the biosynthesis of ganglioside GD1alpha from GM1b. GD1alpha is a critical molecule in the communication and interaction between neuronal cells and their supportive cells, particularly in brain tissues, and functions as an adhesion molecule in the process of metastasis. Sialylation of glycoproteins or glycosphingolipids is very important in tumor development, neuronal development, nerve repair, immunological processes and regulation of hormone sensitivity. The protein is Alpha-N-acetylgalactosaminide alpha-2,6-sialyltransferase 3 (St6galnac3) of Mus musculus (Mouse).